The sequence spans 299 residues: J domain-containing protein CG6693 (299 aa).

Residues 15 to 82 (DVYKLMELAR…QKRALYDEQG (68 aa)) form the J domain. Phosphoserine is present on serine 239. The disordered stretch occupies residues 266–299 (FEKKKKKSKKPAAKQETKPKLNGVKAGRVEKGKN). Residues 268–277 (KKKKKSKKPA) show a composition bias toward basic residues.

This is J domain-containing protein CG6693 from Drosophila melanogaster (Fruit fly).